Reading from the N-terminus, the 215-residue chain is ATP phosphoribosyltransferase (215 aa).

It belongs to the ATP phosphoribosyltransferase family. Short subfamily. In terms of assembly, heteromultimer composed of HisG and HisZ subunits.

It localises to the cytoplasm. It carries out the reaction 1-(5-phospho-beta-D-ribosyl)-ATP + diphosphate = 5-phospho-alpha-D-ribose 1-diphosphate + ATP. The protein operates within amino-acid biosynthesis; L-histidine biosynthesis; L-histidine from 5-phospho-alpha-D-ribose 1-diphosphate: step 1/9. Functionally, catalyzes the condensation of ATP and 5-phosphoribose 1-diphosphate to form N'-(5'-phosphoribosyl)-ATP (PR-ATP). Has a crucial role in the pathway because the rate of histidine biosynthesis seems to be controlled primarily by regulation of HisG enzymatic activity. In Clostridium acetobutylicum (strain ATCC 824 / DSM 792 / JCM 1419 / IAM 19013 / LMG 5710 / NBRC 13948 / NRRL B-527 / VKM B-1787 / 2291 / W), this protein is ATP phosphoribosyltransferase (hisG).